A 341-amino-acid chain; its full sequence is Protein CbhE (341 aa).

Residues 287–297 show a composition bias toward acidic residues; the sequence is IDEENTSDSSE. The tract at residues 287 to 341 is disordered; sequence IDEENTSDSSEEGTSKNRFRDTLFSNVPDSSSDSENEQEREKKELAGKTPSFRLC. Positions 323 to 332 are enriched in basic and acidic residues; sequence EQEREKKELA.

The protein localises to the cytoplasm. In terms of biological role, may be involved in the pathogenesis of acute Q fever. In Coxiella burnetii (strain RSA 493 / Nine Mile phase I), this protein is Protein CbhE (cbhE).